We begin with the raw amino-acid sequence, 359 residues long: Outer membrane protein A (359 aa).

The signal sequence occupies residues 1-21 (MKKTAIALAVALAGFATVAQA). Beta stranded transmembrane passes span 27-37 (TWYTGAKLGWS), 62-73 (QLGAGAFLGYQA), 77-85 (LGFELGYDW), 103-114 (QGVQLAAKLSYP), 119-127 (LDIYTRLGG), 154-163 (PLAAVGVEYA), 168-175 (WATRLDYQ), and 194-202 (MLSLGVSYR). 5 tandem repeats follow at residues 210–211 (AP), 212–213 (AP), 214–215 (AP), 216–217 (AP), and 218–219 (AP). Residues 210–219 (APAPAPAPAP) form a 5 X 2 AA tandem repeats of A-P region. The region spanning 221-351 (VETKRFTLKS…RVEIEVKGIK (131 aa)) is the OmpA-like domain. The cysteines at positions 322 and 336 are disulfide-linked.

It belongs to the outer membrane OOP (TC 1.B.6) superfamily. OmpA family. As to quaternary structure, monomer and homodimer.

It localises to the cell outer membrane. Functionally, with TolR probably plays a role in maintaining the position of the peptidoglycan cell wall in the periplasm. Acts as a porin with low permeability that allows slow penetration of small solutes; an internal gate slows down solute passage. This chain is Outer membrane protein A, found in Serratia marcescens.